Consider the following 498-residue polypeptide: MAAKSDGVLKMKKSDVAFTPLQNSEHSGSVQGLHPGAQPDSAGAGDADFANGESRCCGGGGSHSTCLRLSREQQKYTVWDCLWIVAAVAVYVADVGSDVWLSVDYYLEEDYWWFGLTLFFVVLGSFSVQLFSFRWFVHDFSTEDSAEAAADGSHMDGNKLLSGSASHGDVTAQHHPATPQRQASTASRNTTTNSTASTGLGPRGPKRPAYYTFCVWGSQSVIHILQLGQIWRYIHTIYLGVQSRQSAETERWRYYWRMVYEFADVSMLHLLATFLESAPQLVLQLCIIIQTHKLLAVQGCRLFIYYLLILAENAALSALWYLYRSPLATDAFAVPALCVIFSSFLTGVVFMLMYYAFFHPNGPRFGRSMSGHGLNLDPTAQFSTLPSEVATNSLRSNRGATATLERDAGKYSERDGCMPVFQVRPTVPSTPSSRAPRLEETVIKIDLCRNRYPAWERHVLDRSIRKAILAVDCSLTPPRLQYKDDALVQERLEYETTL.

The segment at 24–46 (SEHSGSVQGLHPGAQPDSAGAGD) is disordered. The next 2 membrane-spanning stretches (helical) occupy residues 81–101 (CLWI…DVWL) and 111–131 (YWWF…VQLF). The disordered stretch occupies residues 166-203 (SHGDVTAQHHPATPQRQASTASRNTTTNSTASTGLGPR). Low complexity predominate over residues 183 to 198 (ASTASRNTTTNSTAST). 2 helical membrane-spanning segments follow: residues 302–322 (LFIY…LWYL) and 332–352 (FAVP…VFML).

This sequence belongs to the XK family.

The protein localises to the cell membrane. The enzyme catalyses a 1,2-diacyl-sn-glycero-3-phospho-L-serine(in) = a 1,2-diacyl-sn-glycero-3-phospho-L-serine(out). Its function is as follows. Phospholipid scramblase that promotes phosphatidylserine exposure on apoptotic cell surface. Phosphatidylserine is a specific marker only present at the surface of apoptotic cells and acts as a specific signal for engulfment. This Tetraodon nigroviridis (Spotted green pufferfish) protein is XK-related protein 4.